The sequence spans 344 residues: N-acetyl-gamma-glutamyl-phosphate reductase (344 aa).

C150 is a catalytic residue.

The protein belongs to the NAGSA dehydrogenase family. Type 1 subfamily.

Its subcellular location is the cytoplasm. The enzyme catalyses N-acetyl-L-glutamate 5-semialdehyde + phosphate + NADP(+) = N-acetyl-L-glutamyl 5-phosphate + NADPH + H(+). Its pathway is amino-acid biosynthesis; L-arginine biosynthesis; N(2)-acetyl-L-ornithine from L-glutamate: step 3/4. In terms of biological role, catalyzes the NADPH-dependent reduction of N-acetyl-5-glutamyl phosphate to yield N-acetyl-L-glutamate 5-semialdehyde. The chain is N-acetyl-gamma-glutamyl-phosphate reductase from Pseudomonas syringae pv. syringae (strain B728a).